The sequence spans 1405 residues: MAFRKENKVKSFTRIFISLASSDNILAQSSGEVLKPETINYRTYRPERDGLFCERIFGPIKDYECHCGKYKRIRYKGVVCDRCGVEVTEKRVRRERMGHIQLVVPVVHIWYFRSLPNKIGYLLGLSSKKLDAIIYYERFVVIQPGITDKKVCDLLSEEEYLEVLDGLPVENQRLDDINPDKFIAKMGGEAIYDLLSRLELDSLSYELRHKIDNDTSQQRKIDALKRLQVIESFRSSKNKNRPEWMVIGVIPVIPPELRPLIPLDGGRFAASDVNDLYRRVIIRNNRLKRLIDIDAPDVILRNEKRMLQEAVDSLFDNSRKSSAVKTDANRPLKSLSDSLKGKQGRFRQNLLGKRVDYSARSVIVVGPELKMHECGLPKGIAAELYKPFIIRKLMDRGVVKTVKSAKKLVDGRDPIIWDILEYVMKGHPVLLNRAPTLHRLSIQAFQPKLIEGKAIQLHPLSCTAFNADFDGDQMAVHLPLGNEAILEAQMLMLASHNILNPANGTPITIPSQDMVLGLFYITKMRRGAKGEGLKFYGTEEAIIAYNEGKVDIHAFVKVYVDDIDENGTPINHIIETSVGRVIVNGFVPKAVGFVNEELSKKSLRSVISDVIKTCGVSRTAQFLDDIKDLGYMMAFKGCLSFNLDNVIVPKEKETFVQEGYKEIEEILANYNMGIITYNERYNQIIDTWTHVNSRLSDALMKQLREDDQGFNPVFMMLESGARGSKEQIRQLSGMRGLMAKPQKSVMGGGQIIENPILSNFKEGLSVLEYFISTHGARKGLADTALKTADAGYLTRRLVDVSHNVIINEEDCGTLRGLIATELRKNEDVVVSLYERILGRVSVCDVQHPESRKIIVYAGEEISEDKALAIQNSSIERVEIRSVLTCESKKGVCVKCYGRNLATGSIVQIGEAVGVIAAQSIGEPGTQLTLRTFHVGGIASNIATESSVVSKYDGILEIDELRTVEVVDEINNRHLIVVSRLAEMRIIDTRTKIVLATYNIPYASKLFFNDRDEIKKGDLLFEWDAFNASIVSEVAGRFHLENVIENITYKNEYDEQTGLKEKVIIESRDKTKIPVIHILDENGEIRRIYNLPLGAHITKEEKDVIRVGEVLVKIPRTVGKTGDITGGLPRVTELFEARNPSNPAVVSEIDGEISFGKVKRGSREVIVTSKNGDYRTYLVSLSKQILVQENDYIRAGMPLSDGIIAPSDILAVNGPTAVQEYIVNEIQDVYRLQGVKINDKHFEVIVRQMMRKVEIIEAGDTKFVARQLVDRDEVSEENDHIWDKKVVVNVGDSSNVKQGQIITMRKLREENSILKRRDLRLIEVRDSIPATVMQILQGITRASLQTSSFISAASFQETAKVLNEAAIKGKVDKLVGMKENVICGRLIPAGTGLKEYDKIMVETTME.

The Zn(2+) site is built by C65, C67, C80, and C83. The Mg(2+) site is built by D468, D470, and D472. Positions 811, 885, 892, and 895 each coordinate Zn(2+).

The protein belongs to the RNA polymerase beta' chain family. The RNAP catalytic core consists of 2 alpha, 1 beta, 1 beta' and 1 omega subunit. When a sigma factor is associated with the core the holoenzyme is formed, which can initiate transcription. The cofactor is Mg(2+). Zn(2+) serves as cofactor.

The catalysed reaction is RNA(n) + a ribonucleoside 5'-triphosphate = RNA(n+1) + diphosphate. In terms of biological role, DNA-dependent RNA polymerase catalyzes the transcription of DNA into RNA using the four ribonucleoside triphosphates as substrates. In Azobacteroides pseudotrichonymphae genomovar. CFP2, this protein is DNA-directed RNA polymerase subunit beta'.